Consider the following 615-residue polypeptide: Dihydroxy-acid dehydratase (615 aa).

Aspartate 81 provides a ligand contact to Mg(2+). Position 122 (cysteine 122) interacts with [2Fe-2S] cluster. Aspartate 123 and lysine 124 together coordinate Mg(2+). Residue lysine 124 is modified to N6-carboxylysine. Residue cysteine 193 participates in [2Fe-2S] cluster binding. Glutamate 489 provides a ligand contact to Mg(2+). Serine 515 serves as the catalytic Proton acceptor.

It belongs to the IlvD/Edd family. Homodimer. [2Fe-2S] cluster serves as cofactor. The cofactor is Mg(2+).

It carries out the reaction (2R)-2,3-dihydroxy-3-methylbutanoate = 3-methyl-2-oxobutanoate + H2O. It catalyses the reaction (2R,3R)-2,3-dihydroxy-3-methylpentanoate = (S)-3-methyl-2-oxopentanoate + H2O. Its pathway is amino-acid biosynthesis; L-isoleucine biosynthesis; L-isoleucine from 2-oxobutanoate: step 3/4. It participates in amino-acid biosynthesis; L-valine biosynthesis; L-valine from pyruvate: step 3/4. Functionally, functions in the biosynthesis of branched-chain amino acids. Catalyzes the dehydration of (2R,3R)-2,3-dihydroxy-3-methylpentanoate (2,3-dihydroxy-3-methylvalerate) into 2-oxo-3-methylpentanoate (2-oxo-3-methylvalerate) and of (2R)-2,3-dihydroxy-3-methylbutanoate (2,3-dihydroxyisovalerate) into 2-oxo-3-methylbutanoate (2-oxoisovalerate), the penultimate precursor to L-isoleucine and L-valine, respectively. This is Dihydroxy-acid dehydratase from Pseudomonas syringae pv. syringae (strain B728a).